The primary structure comprises 516 residues: L-amino-acid oxidase (516 aa).

The signal sequence occupies residues 1–18; the sequence is MNVFFMFSLLFLAALGSC. The cysteines at positions 28 and 191 are disulfide-linked. FAD contacts are provided by residues 61–62, 81–82, arginine 89, and 105–108; these read MA, EA, and GPMR. Arginine 108 serves as a coordination point for substrate. Asparagine 190 carries N-linked (GlcNAc...) (complex) asparagine glycosylation. Histidine 241 contributes to the substrate binding site. Valine 279 contributes to the FAD binding site. Cysteine 349 and cysteine 430 are oxidised to a cystine. Asparagine 379 carries N-linked (GlcNAc...) (complex) asparagine glycosylation. Tyrosine 390 contacts substrate. Residues glutamate 475 and 482–487 contribute to the FAD site; that span reads GWIDST. 482-483 provides a ligand contact to substrate; that stretch reads GW.

As to quaternary structure, homodimer; non-covalently linked. FAD is required as a cofactor. N-glycosylated at Asn-190 and Asn-379 with bis-sialylated, biantennary, core-fucosylated dodecasaccharide (composed of N-acetylglucosamine, fucose, mannose, galactose, and sialic acid residues). Expressed by the venom gland.

It localises to the secreted. It catalyses the reaction an L-alpha-amino acid + O2 + H2O = a 2-oxocarboxylate + H2O2 + NH4(+). The catalysed reaction is L-leucine + O2 + H2O = 4-methyl-2-oxopentanoate + H2O2 + NH4(+). The enzyme catalyses L-phenylalanine + O2 + H2O = 3-phenylpyruvate + H2O2 + NH4(+). It carries out the reaction L-tryptophan + O2 + H2O = indole-3-pyruvate + H2O2 + NH4(+). It catalyses the reaction L-methionine + O2 + H2O = 4-methylsulfanyl-2-oxobutanoate + H2O2 + NH4(+). The catalysed reaction is L-isoleucine + O2 + H2O = (S)-3-methyl-2-oxopentanoate + H2O2 + NH4(+). The enzyme catalyses L-arginine + O2 + H2O = 5-guanidino-2-oxopentanoate + H2O2 + NH4(+). It carries out the reaction L-aspartate + O2 + H2O = oxaloacetate + H2O2 + NH4(+). It catalyses the reaction L-histidine + O2 + H2O = 3-(imidazol-5-yl)pyruvate + H2O2 + NH4(+). The catalysed reaction is L-2-aminohexanoate + O2 + H2O = 2-oxohexanoate + H2O2 + NH4(+). The enzyme catalyses L-2-aminopentanoate + O2 + H2O = 2-oxopentanoate + H2O2 + NH4(+). Functionally, catalyzes an oxidative deamination of predominantly hydrophobic and aromatic L-amino acids, thus producing hydrogen peroxide that may contribute to the diverse toxic effects of this enzyme. Shows high affinity for L-Phe, L-Trp, L-Met, L-Leu, and L-Ile, moderate affinity for L-Arg, L-Asp, and L-His, and very low affinity for L-Gln, L-Lys, and L-Ala. Also shows high activity on L-norleucine (L-2-aminohexanoate), and L-norvaline (L-2-aminopentanoate) and a weak activity on L-ornithine and L-aminobutyric acid. Also exhibits diverse biological activities, such as hemorrhage, hemolysis, edema, apoptosis of vascular endothelial cells or tumor cell lines, and antiparasitic activities, as well as regulation of platelet aggregation. Its effect on platelets is controversial, since it either induces aggregation or inhibits agonist-induced aggregation. These different effects are probably due to different experimental conditions. A possible explanation of high efficacy it that LAAO may bind to target cells through its sialylated glycan moiety that would bind to sialic acid-binding lectins (siglec) on target cells. This interaction may result in production of locally high concentrations of hydrogen peroxide in or near the binding interface, leading, in turn to oxidative damage of the siglec or another adjacent cell structural elements. The sequence is that of L-amino-acid oxidase from Calloselasma rhodostoma (Malayan pit viper).